Here is a 38-residue protein sequence, read N- to C-terminus: Photosystem II reaction center protein X (38 aa).

A helical transmembrane segment spans residues 9–29 (IASLFAGAFIALAIGGVLVFI).

The protein belongs to the PsbX family. Type 1 subfamily. In terms of assembly, PSII is composed of 1 copy each of membrane proteins PsbA, PsbB, PsbC, PsbD, PsbE, PsbF, PsbH, PsbI, PsbJ, PsbK, PsbL, PsbM, PsbT, PsbX, PsbY, PsbZ, Psb30/Ycf12, at least 3 peripheral proteins of the oxygen-evolving complex and a large number of cofactors. It forms dimeric complexes.

The protein resides in the plastid. The protein localises to the chloroplast thylakoid membrane. Its function is as follows. Involved in the binding and/or turnover of quinones at the Q(B) site of photosystem II (PSII). PSII is a light-driven water plastoquinone oxidoreductase, using light energy to abstract electrons from H(2)O, generating a proton gradient subsequently used for ATP formation. The sequence is that of Photosystem II reaction center protein X from Phaeodactylum tricornutum (strain CCAP 1055/1).